We begin with the raw amino-acid sequence, 207 residues long: Uracil phosphoribosyltransferase (207 aa).

Residues Arg-77, Arg-102, and 129–137 (DPMLATGGS) contribute to the 5-phospho-alpha-D-ribose 1-diphosphate site. Residues Ile-192 and 197–199 (GDA) each bind uracil. A 5-phospho-alpha-D-ribose 1-diphosphate-binding site is contributed by Asp-198.

Belongs to the UPRTase family. Mg(2+) serves as cofactor.

The enzyme catalyses UMP + diphosphate = 5-phospho-alpha-D-ribose 1-diphosphate + uracil. It functions in the pathway pyrimidine metabolism; UMP biosynthesis via salvage pathway; UMP from uracil: step 1/1. Allosterically activated by GTP. Catalyzes the conversion of uracil and 5-phospho-alpha-D-ribose 1-diphosphate (PRPP) to UMP and diphosphate. The polypeptide is Uracil phosphoribosyltransferase (Mycobacterium marinum (strain ATCC BAA-535 / M)).